The primary structure comprises 138 residues: Basic phospholipase A2 DAV-N6 (138 aa).

A signal peptide spans Met1–Gly16. Intrachain disulfides connect Cys42-Cys131, Cys44-Cys60, Cys59-Cys111, Cys65-Cys138, Cys66-Cys104, Cys73-Cys97, and Cys91-Cys102. Tyr43, Gly45, and Gly47 together coordinate Ca(2+). His63 is an active-site residue. Asp64 contacts Ca(2+). Residue Asp105 is part of the active site.

The cofactor is Ca(2+). As to expression, expressed by the venom gland.

Its subcellular location is the secreted. It catalyses the reaction a 1,2-diacyl-sn-glycero-3-phosphocholine + H2O = a 1-acyl-sn-glycero-3-phosphocholine + a fatty acid + H(+). Functionally, snake venom phospholipase A2 (PLA2) that inhibits neuromuscular transmission by blocking acetylcholine release from the nerve termini. PLA2 catalyzes the calcium-dependent hydrolysis of the 2-acyl groups in 3-sn-phosphoglycerides. This chain is Basic phospholipase A2 DAV-N6, found in Deinagkistrodon acutus (Hundred-pace snake).